A 439-amino-acid polypeptide reads, in one-letter code: Glutamate--tRNA ligase 2 (439 aa).

The 'HIGH' region motif lies at 6–16; sequence PSPTGDMHIGN. A 'KMSKS' region motif is present at residues 232-236; sequence KMSKR. Lys235 provides a ligand contact to ATP.

Belongs to the class-I aminoacyl-tRNA synthetase family. Glutamate--tRNA ligase type 1 subfamily. As to quaternary structure, monomer.

Its subcellular location is the cytoplasm. It carries out the reaction tRNA(Glu) + L-glutamate + ATP = L-glutamyl-tRNA(Glu) + AMP + diphosphate. In terms of biological role, catalyzes the attachment of glutamate to tRNA(Glu) in a two-step reaction: glutamate is first activated by ATP to form Glu-AMP and then transferred to the acceptor end of tRNA(Glu). This chain is Glutamate--tRNA ligase 2, found in Helicobacter pylori (strain P12).